Reading from the N-terminus, the 203-residue chain is Holliday junction branch migration complex subunit RuvA (203 aa).

The tract at residues 1–64 (MIGRLNGILV…EDAQLLYGFI (64 aa)) is domain I. Positions 65–143 (TKQERALFRL…SLLEASVGNE (79 aa)) are domain II. The tract at residues 144 to 154 (REFMLQTNYTA) is flexible linker. Positions 155–203 (PAANAEEDAISALVSLGYKPPQASRAVSKAYKEGMDTETLIKLALKSML) are domain III.

The protein belongs to the RuvA family. In terms of assembly, homotetramer. Forms an RuvA(8)-RuvB(12)-Holliday junction (HJ) complex. HJ DNA is sandwiched between 2 RuvA tetramers; dsDNA enters through RuvA and exits via RuvB. An RuvB hexamer assembles on each DNA strand where it exits the tetramer. Each RuvB hexamer is contacted by two RuvA subunits (via domain III) on 2 adjacent RuvB subunits; this complex drives branch migration. In the full resolvosome a probable DNA-RuvA(4)-RuvB(12)-RuvC(2) complex forms which resolves the HJ.

The protein localises to the cytoplasm. Its function is as follows. The RuvA-RuvB-RuvC complex processes Holliday junction (HJ) DNA during genetic recombination and DNA repair, while the RuvA-RuvB complex plays an important role in the rescue of blocked DNA replication forks via replication fork reversal (RFR). RuvA specifically binds to HJ cruciform DNA, conferring on it an open structure. The RuvB hexamer acts as an ATP-dependent pump, pulling dsDNA into and through the RuvAB complex. HJ branch migration allows RuvC to scan DNA until it finds its consensus sequence, where it cleaves and resolves the cruciform DNA. The protein is Holliday junction branch migration complex subunit RuvA of Shewanella denitrificans (strain OS217 / ATCC BAA-1090 / DSM 15013).